We begin with the raw amino-acid sequence, 398 residues long: Putative F-box protein At4g17780 (398 aa).

The region spanning 8–55 (PSSIYIVADLLEDIFLRLPLKSILISKSVSKRWRSILESKTFVERRMS) is the F-box domain.

The protein is Putative F-box protein At4g17780 of Arabidopsis thaliana (Mouse-ear cress).